We begin with the raw amino-acid sequence, 113 residues long: UPF0122 protein Lreu_1156 (113 aa).

Belongs to the UPF0122 family.

In terms of biological role, might take part in the signal recognition particle (SRP) pathway. This is inferred from the conservation of its genetic proximity to ftsY/ffh. May be a regulatory protein. This Limosilactobacillus reuteri (strain DSM 20016) (Lactobacillus reuteri) protein is UPF0122 protein Lreu_1156.